The chain runs to 435 residues: Bifunctional protein GlmU (435 aa).

Residues 1 to 224 (MNDTSIIILA…EQNFMGINDK (224 aa)) form a pyrophosphorylase region. UDP-N-acetyl-alpha-D-glucosamine is bound by residues 9-12 (LAAG), lysine 23, glutamine 75, and 82-83 (GT). Aspartate 103 is a Mg(2+) binding site. Residues glycine 136, glutamate 150, asparagine 165, and asparagine 222 each coordinate UDP-N-acetyl-alpha-D-glucosamine. Asparagine 222 lines the Mg(2+) pocket. A linker region spans residues 225–245 (FQLSVAEKIMQDEIKQDLMKA). The tract at residues 246 to 435 (GVLMRLPESI…KFFGKNNAEK (190 aa)) is N-acetyltransferase. UDP-N-acetyl-alpha-D-glucosamine is bound by residues arginine 309 and lysine 326. Histidine 337 functions as the Proton acceptor in the catalytic mechanism. UDP-N-acetyl-alpha-D-glucosamine contacts are provided by tyrosine 340 and asparagine 351. Residues 360–361 (NY), serine 379, alanine 397, and arginine 414 contribute to the acetyl-CoA site.

The protein in the N-terminal section; belongs to the N-acetylglucosamine-1-phosphate uridyltransferase family. In the C-terminal section; belongs to the transferase hexapeptide repeat family. In terms of assembly, homotrimer. The cofactor is Mg(2+).

It localises to the cytoplasm. It carries out the reaction alpha-D-glucosamine 1-phosphate + acetyl-CoA = N-acetyl-alpha-D-glucosamine 1-phosphate + CoA + H(+). The catalysed reaction is N-acetyl-alpha-D-glucosamine 1-phosphate + UTP + H(+) = UDP-N-acetyl-alpha-D-glucosamine + diphosphate. Its pathway is nucleotide-sugar biosynthesis; UDP-N-acetyl-alpha-D-glucosamine biosynthesis; N-acetyl-alpha-D-glucosamine 1-phosphate from alpha-D-glucosamine 6-phosphate (route II): step 2/2. The protein operates within nucleotide-sugar biosynthesis; UDP-N-acetyl-alpha-D-glucosamine biosynthesis; UDP-N-acetyl-alpha-D-glucosamine from N-acetyl-alpha-D-glucosamine 1-phosphate: step 1/1. It functions in the pathway bacterial outer membrane biogenesis; LPS lipid A biosynthesis. Catalyzes the last two sequential reactions in the de novo biosynthetic pathway for UDP-N-acetylglucosamine (UDP-GlcNAc). The C-terminal domain catalyzes the transfer of acetyl group from acetyl coenzyme A to glucosamine-1-phosphate (GlcN-1-P) to produce N-acetylglucosamine-1-phosphate (GlcNAc-1-P), which is converted into UDP-GlcNAc by the transfer of uridine 5-monophosphate (from uridine 5-triphosphate), a reaction catalyzed by the N-terminal domain. The chain is Bifunctional protein GlmU from Campylobacter curvus (strain 525.92).